We begin with the raw amino-acid sequence, 179 residues long: ATP synthase subunit delta (179 aa).

Belongs to the ATPase delta chain family. As to quaternary structure, F-type ATPases have 2 components, F(1) - the catalytic core - and F(0) - the membrane proton channel. F(1) has five subunits: alpha(3), beta(3), gamma(1), delta(1), epsilon(1). F(0) has three main subunits: a(1), b(2) and c(10-14). The alpha and beta chains form an alternating ring which encloses part of the gamma chain. F(1) is attached to F(0) by a central stalk formed by the gamma and epsilon chains, while a peripheral stalk is formed by the delta and b chains.

It is found in the cell inner membrane. F(1)F(0) ATP synthase produces ATP from ADP in the presence of a proton or sodium gradient. F-type ATPases consist of two structural domains, F(1) containing the extramembraneous catalytic core and F(0) containing the membrane proton channel, linked together by a central stalk and a peripheral stalk. During catalysis, ATP synthesis in the catalytic domain of F(1) is coupled via a rotary mechanism of the central stalk subunits to proton translocation. Functionally, this protein is part of the stalk that links CF(0) to CF(1). It either transmits conformational changes from CF(0) to CF(1) or is implicated in proton conduction. The protein is ATP synthase subunit delta of Burkholderia cenocepacia (strain ATCC BAA-245 / DSM 16553 / LMG 16656 / NCTC 13227 / J2315 / CF5610) (Burkholderia cepacia (strain J2315)).